The sequence spans 488 residues: TOX high mobility group box family member 2 (488 aa).

A required for transcriptional activation region spans residues 76-114 (YEIPPITPPNLPEPSLLHLGDHEASYHSLCHGLTPNGLL). Disordered regions lie at residues 192 to 258 (RSSI…PQKP), 293 to 328 (WDSL…KQPM), and 363 to 473 (SLLP…ECGI). The span at 204–216 (GSKSATPSPSSST) shows a compositional bias: low complexity. The span at 222 to 239 (EVHFKISGEKRPSADPGK) shows a compositional bias: basic and acidic residues. The Nuclear localization signal motif lies at 223–252 (VHFKISGEKRPSADPGKKAKNPKKKKKKDP). Residues 240–250 (KAKNPKKKKKK) are compositionally biased toward basic residues. The HMG box DNA-binding region spans 255 to 323 (PQKPVSAYAL…QANPPAKMLP (69 aa)). A compositionally biased stretch (polar residues) spans 302-316 (QSSPDQGETKSTQAN). Over residues 443 to 460 (PSSSGSCSPGPSNPTSSG) the composition is skewed to low complexity.

Its subcellular location is the nucleus. Functionally, putative transcriptional activator involved in the hypothalamo-pituitary-gonadal system. The chain is TOX high mobility group box family member 2 (TOX2) from Homo sapiens (Human).